The chain runs to 212 residues: Protein-L-isoaspartate O-methyltransferase 1 (212 aa).

Ser60 is an active-site residue.

Belongs to the methyltransferase superfamily. L-isoaspartyl/D-aspartyl protein methyltransferase family.

The protein localises to the cytoplasm. It carries out the reaction [protein]-L-isoaspartate + S-adenosyl-L-methionine = [protein]-L-isoaspartate alpha-methyl ester + S-adenosyl-L-homocysteine. Catalyzes the methyl esterification of L-isoaspartyl residues in peptides and proteins that result from spontaneous decomposition of normal L-aspartyl and L-asparaginyl residues. It plays a role in the repair and/or degradation of damaged proteins. This chain is Protein-L-isoaspartate O-methyltransferase 1, found in Anaeromyxobacter sp. (strain Fw109-5).